Consider the following 723-residue polypeptide: Fatty acid oxidation complex subunit alpha (723 aa).

Residues 1 to 189 (MIYQAETLQV…KIGLLDAVVD (189 aa)) form an enoyl-CoA hydratase/isomerase region. D296 contributes to the substrate binding site. The segment at 311 to 723 (NKETQRAAVL…FYGAQQQGSI (413 aa)) is 3-hydroxyacyl-CoA dehydrogenase. Residues M325, D344, 401-403 (VVE), K408, and S430 contribute to the NAD(+) site. H451 serves as the catalytic For 3-hydroxyacyl-CoA dehydrogenase activity. N454 is a binding site for NAD(+). Residues N501 and Y661 each coordinate substrate.

In the N-terminal section; belongs to the enoyl-CoA hydratase/isomerase family. The protein in the C-terminal section; belongs to the 3-hydroxyacyl-CoA dehydrogenase family. In terms of assembly, heterotetramer of two alpha chains (FadB) and two beta chains (FadA).

The catalysed reaction is a (3S)-3-hydroxyacyl-CoA + NAD(+) = a 3-oxoacyl-CoA + NADH + H(+). The enzyme catalyses a (3S)-3-hydroxyacyl-CoA = a (2E)-enoyl-CoA + H2O. It catalyses the reaction a 4-saturated-(3S)-3-hydroxyacyl-CoA = a (3E)-enoyl-CoA + H2O. It carries out the reaction (3S)-3-hydroxybutanoyl-CoA = (3R)-3-hydroxybutanoyl-CoA. The catalysed reaction is a (3Z)-enoyl-CoA = a 4-saturated (2E)-enoyl-CoA. The enzyme catalyses a (3E)-enoyl-CoA = a 4-saturated (2E)-enoyl-CoA. Its pathway is lipid metabolism; fatty acid beta-oxidation. Its function is as follows. Involved in the aerobic and anaerobic degradation of long-chain fatty acids via beta-oxidation cycle. Catalyzes the formation of 3-oxoacyl-CoA from enoyl-CoA via L-3-hydroxyacyl-CoA. It can also use D-3-hydroxyacyl-CoA and cis-3-enoyl-CoA as substrate. The sequence is that of Fatty acid oxidation complex subunit alpha from Vibrio vulnificus (strain YJ016).